A 554-amino-acid polypeptide reads, in one-letter code: Thermosome subunit beta (554 aa).

The segment at 532–554 (GKKSGSEPSGKKEKDKEEKSSED) is disordered. A compositionally biased stretch (basic and acidic residues) spans 540 to 554 (SGKKEKDKEEKSSED).

It belongs to the TCP-1 chaperonin family. As to quaternary structure, forms a Heterooligomeric complex of two stacked eight-membered rings.

Its function is as follows. Molecular chaperone; binds unfolded polypeptides in vitro, and has a weak ATPase activity. The sequence is that of Thermosome subunit beta (thsB) from Saccharolobus solfataricus (strain ATCC 35092 / DSM 1617 / JCM 11322 / P2) (Sulfolobus solfataricus).